The following is a 448-amino-acid chain: MRGDTGAIVGVCISHERASVDQLETAAADSERHAVESLLANPAVEEAIALQTCNRTEGYVVVSDHEDGLEALELFTRAVPDDVVVEMGHEESLRHLLRVAAGLESIVLGEDQILGQLRTAYETARGVGGIGPMLEDGVTKAIHVGERARTETKINEGVVSIASAAVRLLKQESSLTDGTALVVGAGEMGQLAAEALSEEVDRLLVANRTVPHAEHIAESVDIDASALALDGIEAAVSEASAVISATGSGDQVFDIGTFSDSGDVSIVDIAQPRDVPAGADRLPSVTVYDLDALESVTAETRNKRQRAAEAVERIVDEEFDRLLTQYKRKRADRVISTMYESAEQVKAAEINSALSAADFDDEQAEVVEAMADAIVSQILAAPTKSLRDAAEEDDWSTIHTALQLFDPDFGGPDQATPPEFTKGMSVEDIPDGMRDEIPNAMLDRLSDD.

Substrate contacts are provided by residues 52–55 (TCNR), Ser-105, 110–112 (EDQ), and Gln-116. Cys-53 functions as the Nucleophile in the catalytic mechanism. 184-189 (GAGEMG) contacts NADP(+). The disordered stretch occupies residues 406-435 (DPDFGGPDQATPPEFTKGMSVEDIPDGMRD).

Belongs to the glutamyl-tRNA reductase family. Homodimer.

The enzyme catalyses (S)-4-amino-5-oxopentanoate + tRNA(Glu) + NADP(+) = L-glutamyl-tRNA(Glu) + NADPH + H(+). Its pathway is porphyrin-containing compound metabolism; protoporphyrin-IX biosynthesis; 5-aminolevulinate from L-glutamyl-tRNA(Glu): step 1/2. In terms of biological role, catalyzes the NADPH-dependent reduction of glutamyl-tRNA(Glu) to glutamate 1-semialdehyde (GSA). The sequence is that of Glutamyl-tRNA reductase from Haloarcula marismortui (strain ATCC 43049 / DSM 3752 / JCM 8966 / VKM B-1809) (Halobacterium marismortui).